We begin with the raw amino-acid sequence, 143 residues long: Alpha-S2-casein-like B (143 aa).

Residues 1–15 form the signal peptide; it reads MKFIILTCLLAVALA.

The protein belongs to the alpha-casein family. Mammary gland specific. Secreted in milk.

Its subcellular location is the secreted. Its function is as follows. Important role in the capacity of milk to transport calcium phosphate. The polypeptide is Alpha-S2-casein-like B (Csn1s2b) (Mus musculus (Mouse)).